We begin with the raw amino-acid sequence, 345 residues long: Ubiquinone biosynthesis O-methyltransferase, mitochondrial (345 aa).

The N-terminal 86 residues, 1-86 (MWRGGRLSSR…TYRSSWKKLY (86 aa)), are a transit peptide targeting the mitochondrion. Residue Arg-124 participates in S-adenosyl-L-methionine binding. Lys-143 and Lys-149 each carry N6-acetyllysine. S-adenosyl-L-methionine is bound by residues Gly-154 and Asp-175. Lys-196 bears the N6-acetyllysine mark. Residue Ser-222 coordinates S-adenosyl-L-methionine. Mg(2+) is bound by residues Glu-223, Glu-226, and His-227.

Belongs to the class I-like SAM-binding methyltransferase superfamily. UbiG/COQ3 family. Component of a multi-subunit COQ enzyme complex, composed of at least COQ3, COQ4, COQ5, COQ6, COQ7 and COQ9. Requires Mg(2+) as cofactor.

Its subcellular location is the mitochondrion inner membrane. The enzyme catalyses 3,4-dihydroxy-5-(all-trans-decaprenyl)benzoate + S-adenosyl-L-methionine = 4-hydroxy-3-methoxy-5-(all-trans-decaprenyl)benzoate + S-adenosyl-L-homocysteine + H(+). The catalysed reaction is a 3-demethylubiquinone + S-adenosyl-L-methionine = a ubiquinone + S-adenosyl-L-homocysteine. It carries out the reaction 3-demethylubiquinol-10 + S-adenosyl-L-methionine = ubiquinol-10 + S-adenosyl-L-homocysteine + H(+). It participates in cofactor biosynthesis; ubiquinone biosynthesis. Functionally, O-methyltransferase required for two non-consecutive steps during ubiquinone biosynthesis. Catalyzes the 2 O-methylation of 3,4-dihydroxy-5-(all-trans-decaprenyl)benzoic acid into 4-hydroxy-3-methoxy-5-(all-trans-decaprenyl)benzoic acid. Also catalyzes the last step of ubiquinone biosynthesis by mediating methylation of 3-demethylubiquinone into ubiquinone. Also able to mediate the methylation of 3-demethylubiquinol-10 into ubiquinol-10. The protein is Ubiquinone biosynthesis O-methyltransferase, mitochondrial of Rattus norvegicus (Rat).